Here is a 474-residue protein sequence, read N- to C-terminus: ATP synthase subunit beta (474 aa).

Residue 151 to 158 (GGAGVGKT) participates in ATP binding.

Belongs to the ATPase alpha/beta chains family. In terms of assembly, F-type ATPases have 2 components, CF(1) - the catalytic core - and CF(0) - the membrane proton channel. CF(1) has five subunits: alpha(3), beta(3), gamma(1), delta(1), epsilon(1). CF(0) has three main subunits: a(1), b(2) and c(9-12). The alpha and beta chains form an alternating ring which encloses part of the gamma chain. CF(1) is attached to CF(0) by a central stalk formed by the gamma and epsilon chains, while a peripheral stalk is formed by the delta and b chains.

Its subcellular location is the cell inner membrane. The catalysed reaction is ATP + H2O + 4 H(+)(in) = ADP + phosphate + 5 H(+)(out). In terms of biological role, produces ATP from ADP in the presence of a proton gradient across the membrane. The catalytic sites are hosted primarily by the beta subunits. The protein is ATP synthase subunit beta of Paracoccus denitrificans (strain Pd 1222).